Reading from the N-terminus, the 358-residue chain is NADH-quinone oxidoreductase subunit H (358 aa).

A run of 8 helical transmembrane segments spans residues 29-49 (LIKIICVVLPLLGAVAYLTLW), 95-115 (GLFYLGPVMAIMPALGAWAVI), 130-150 (LLLVMAITSIEVYGVIIAGWA), 176-196 (FCFLVVIMVSGSMNLTEIVAV), 206-226 (GLGFLSWNWLPLFPIFIVYLI), 258-280 (GFAIFFLAEYASMWLVSILAVVM), 297-317 (GWIWLGIKTFLVVSMFIWIRA), and 334-354 (IFIPVTLVWLLVVGAWLLSPW).

The protein belongs to the complex I subunit 1 family. In terms of assembly, NDH-1 is composed of 14 different subunits. Subunits NuoA, H, J, K, L, M, N constitute the membrane sector of the complex.

The protein resides in the cell inner membrane. It carries out the reaction a quinone + NADH + 5 H(+)(in) = a quinol + NAD(+) + 4 H(+)(out). In terms of biological role, NDH-1 shuttles electrons from NADH, via FMN and iron-sulfur (Fe-S) centers, to quinones in the respiratory chain. The immediate electron acceptor for the enzyme in this species is believed to be ubiquinone. Couples the redox reaction to proton translocation (for every two electrons transferred, four hydrogen ions are translocated across the cytoplasmic membrane), and thus conserves the redox energy in a proton gradient. This subunit may bind ubiquinone. The protein is NADH-quinone oxidoreductase subunit H of Acidovorax sp. (strain JS42).